The sequence spans 223 residues: Ras-related protein Rab-21 (223 aa).

N-acetylalanine is present on A2. GTP-binding residues include G26, G29, K30, T31, S32, N43, D44, H46, T48, and T49. Residue T31 coordinates Mg(2+). Residues 41–54 (KFNDKHITTLQASF) carry the Switch 1 motif. 2 residues coordinate Mg(2+): T49 and D72. A Switch 2 motif is present at residues 74-92 (AGQERFHALGPIYYRDSNG). The GTP site is built by G75, N130, K131, D133, A161, and K162. Residues C219 and C220 are each lipidated (S-geranylgeranyl cysteine). Position 220 is a cysteine methyl ester (C220). The propeptide at 221–223 (SSG) is removed in mature form.

The protein belongs to the small GTPase superfamily. Rab family. As to quaternary structure, interacts with the cytoplasmic tail of integrins ITGA1, ITGA2, ITGA5, ITGA6, ITGA11 and ITGB1; this interaction is dependent upon its GDP/GTP cycle. Interacts with RABGEF1 (via VPS9 domain). Interacts with ANKRD27. Interacts (in GTP-bound form) with VAMP8 in response to starvation; the interaction probably regulates VAMP8 endolysosomal trafficking. Interacts (active GTP-bound form) with TMED10; the interaction is indirect and regulates TMED10 abundance and localization at the Golgi. The cofactor is Mg(2+).

It localises to the endoplasmic reticulum membrane. The protein localises to the golgi apparatus. The protein resides in the trans-Golgi network. Its subcellular location is the golgi apparatus membrane. It is found in the early endosome membrane. It localises to the cytoplasmic vesicle membrane. The protein localises to the cleavage furrow. The protein resides in the cell projection. Its subcellular location is the neuron projection. It carries out the reaction GTP + H2O = GDP + phosphate + H(+). Its activity is regulated as follows. Regulated by guanine nucleotide exchange factors (GEFs) including ANKRD27 and RABGEF1, which promote the exchange of bound GDP for free GTP. Regulated by GTPase activating proteins (GAPs) which increase the GTP hydrolysis activity. Inhibited by GDP dissociation inhibitors (GDIs). Its function is as follows. The small GTPases Rab are key regulators of intracellular membrane trafficking, from the formation of transport vesicles to their fusion with membranes. Rabs cycle between an inactive GDP-bound form and an active GTP-bound form that is able to recruit to membranes different sets of downstream effectors directly responsible for vesicle formation, movement, tethering and fusion. RAB21 is involved in membrane trafficking control. Regulates integrin internalization and recycling, but does not influence the traffic of endosomally translocated receptors in general. As a result, may regulate cell adhesion and migration. During the mitosis of adherent cells, controls the endosomal trafficking of integrins which is required for the successful completion of cytokinesis. Involved in neurite growth. Following SBF2/MTMT13-mediated activation in response to starvation-induced autophagy, binds to and regulates SNARE protein VAMP8 endolysosomal transport required for SNARE-mediated autophagosome-lysosome fusion. Modulates protein levels of the cargo receptors TMED2 and TMED10, and required for appropriate Golgi localization of TMED10. In Rattus norvegicus (Rat), this protein is Ras-related protein Rab-21.